Here is a 370-residue protein sequence, read N- to C-terminus: Glutamate 5-kinase (370 aa).

ATP is bound at residue Lys-17. 3 residues coordinate substrate: Ser-57, Asp-144, and Asn-156. Residues 176-177 and 220-226 each bind ATP; these read SD and TGGMVSK. In terms of domain architecture, PUA spans 282–360; the sequence is SGTLTLDDGA…SDLPAEMRRP (79 aa).

Belongs to the glutamate 5-kinase family.

Its subcellular location is the cytoplasm. It catalyses the reaction L-glutamate + ATP = L-glutamyl 5-phosphate + ADP. It functions in the pathway amino-acid biosynthesis; L-proline biosynthesis; L-glutamate 5-semialdehyde from L-glutamate: step 1/2. Its function is as follows. Catalyzes the transfer of a phosphate group to glutamate to form L-glutamate 5-phosphate. In Mycolicibacterium gilvum (strain PYR-GCK) (Mycobacterium gilvum (strain PYR-GCK)), this protein is Glutamate 5-kinase.